Consider the following 150-residue polypeptide: Probable histone H2A.7 (150 aa).

Residues 1–12 are compositionally biased toward basic residues; it reads MESTGKVKKAFG. 2 disordered regions span residues 1 to 27 and 129 to 150; these read MEST…SVSK and KSAT…PKKA. Ser146 carries the phosphoserine modification. The short motif at 146–149 is the SPKK motif element; it reads SPKK.

The protein belongs to the histone H2A family. As to quaternary structure, the nucleosome is a histone octamer containing two molecules each of H2A, H2B, H3 and H4 assembled in one H3-H4 heterotetramer and two H2A-H2B heterodimers. The octamer wraps approximately 147 bp of DNA. Post-translationally, not ubiquitinated. Strong expression through-out the roots and leaves. Also found in meristems and dividing cells.

The protein localises to the nucleus. Its subcellular location is the chromosome. In terms of biological role, core component of nucleosome. Nucleosomes wrap and compact DNA into chromatin, limiting DNA accessibility to the cellular machineries which require DNA as a template. Histones thereby play a central role in transcription regulation, DNA repair, DNA replication and chromosomal stability. DNA accessibility is regulated via a complex set of post-translational modifications of histones, also called histone code, and nucleosome remodeling. In Arabidopsis thaliana (Mouse-ear cress), this protein is Probable histone H2A.7.